The following is a 413-amino-acid chain: MYSPGYVATSSRQSDAGNRLFVYEVIGLSQSTMTDGLDYPIRRSGSTFITVPLKRMNQEMRRITRMGGKIVSIKPLEGDSPLPHTEGIAKPSQSEGSGSEAVANPAPESNKTMTTTPKEKKADDIPVNIYRPKTPYIGKVLENYPLVREGAIGTVQHLTFDLSAGDLRYLEGQSIGIIPPGEDDKGKPHKLRLYSIASTRHGDFGDDKTVSLCVRQLEYQNEAGETVQGVCSTYLCNIKEGDDIAITGPVGKEMLLPPDEDANIVMLATGTGIAPFRAFLWRMFKEQHEDYKFKGLAWLIFGIPKSENILYKDDLEKMAAEFPDNFRLTYAISREQQNAEGGRMYIQHRVAENAEELWNLMQNPKTHTYMCGLKGMEPGIDEAFTALAEQNGKEWTTFQREMKKEHRWHVETY.

M1 bears the N-acetylmethionine mark. One can recognise a CpcD-like domain in the interval 18 to 76 (NRLFVYEVIGLSQSTMTDGLDYPIRRSGSTFITVPLKRMNQEMRRITRMGGKIVSIKPL). Residues 74-120 (KPLEGDSPLPHTEGIAKPSQSEGSGSEAVANPAPESNKTMTTTPKEK) form a disordered region. Over residues 107-116 (PESNKTMTTT) the composition is skewed to polar residues. Residues 133 to 256 (KTPYIGKVLE…TGPVGKEMLL (124 aa)) form the FAD-binding FR-type domain. Residues 192–195 (RLYS), 213–215 (CVR), Y219, 230–232 (VCS), and T271 each bind FAD. NADP(+) contacts are provided by S195 and R215. Residues T271, 303-304 (IP), 333-334 (SR), 343-347 (RMYIQ), 372-373 (GL), and E411 contribute to the NADP(+) site.

Belongs to the ferredoxin--NADP reductase type 1 family. In terms of assembly, purifies with both the classic phycobilisome (PBS) supercomplex (CpcG-PBS) and a photosystem I-associated PBS called CpcL-PBS; it accumulates to a higher level in CpcL-PBS. In both PBS it can be cross-linked to both phycocyanin subunits. FAD serves as cofactor. Post-translationally, acetylated at the N-terminus; 6% of protein in CpcG-PBS and 12% of protein in CpcL-PBS is acetylated.

The protein localises to the cellular thylakoid membrane. The catalysed reaction is 2 reduced [2Fe-2S]-[ferredoxin] + NADP(+) + H(+) = 2 oxidized [2Fe-2S]-[ferredoxin] + NADPH. The protein is Ferredoxin--NADP reductase of Synechocystis sp. (strain ATCC 27184 / PCC 6803 / Kazusa).